We begin with the raw amino-acid sequence, 197 residues long: Fucoxanthin-chlorophyll a-c binding protein D, chloroplastic (197 aa).

A chloroplast-targeting transit peptide spans Met1–Met31. 3 consecutive transmembrane segments (helical) span residues Ile73–Ile94, Pro114–Met133, and Gly174–Pro196.

The protein belongs to the fucoxanthin chlorophyll protein family. The LHC complex of chromophytic algae is composed of fucoxanthin, chlorophyll A and C bound non-covalently by fucoxanthin chlorophyll proteins (FCPs). The ratio of the pigments in LHC; fucoxanthin: chlorophyll C: chlorophyll A; (0.6-1): (0.1-0.3): (1).

It localises to the plastid. The protein resides in the chloroplast thylakoid membrane. Functionally, the light-harvesting complex (LHC) functions as a light receptor, it captures and delivers excitation energy to photosystems with which it is closely associated. Energy is transferred from the carotenoid and chlorophyll C (or B) to chlorophyll A and the photosynthetic reaction centers where it is used to synthesize ATP and reducing power. The sequence is that of Fucoxanthin-chlorophyll a-c binding protein D, chloroplastic (FCPD) from Phaeodactylum tricornutum (Diatom).